Consider the following 201-residue polypeptide: Methylated-DNA--protein-cysteine methyltransferase (201 aa).

DNA contacts are provided by Tyr-131, Gly-132, and Arg-146. Residue Cys-163 is the Nucleophile; methyl group acceptor of the active site.

Belongs to the MGMT family.

The protein resides in the nucleus. It carries out the reaction a 6-O-methyl-2'-deoxyguanosine in DNA + L-cysteinyl-[protein] = S-methyl-L-cysteinyl-[protein] + a 2'-deoxyguanosine in DNA. The catalysed reaction is a 4-O-methyl-thymidine in DNA + L-cysteinyl-[protein] = a thymidine in DNA + S-methyl-L-cysteinyl-[protein]. Its function is as follows. Involved in the cellular defense against the biological effects of O6-methylguanine (O6-MeG) and O4-methylthymine (O4-MeT) in DNA. Repairs the methylated nucleobase in DNA by stoichiometrically transferring the methyl group to a cysteine residue in the enzyme. This is a suicide reaction: the enzyme is irreversibly inactivated. This chain is Methylated-DNA--protein-cysteine methyltransferase (MGT1), found in Lodderomyces elongisporus (strain ATCC 11503 / CBS 2605 / JCM 1781 / NBRC 1676 / NRRL YB-4239) (Yeast).